Reading from the N-terminus, the 535-residue chain is GMP synthase [glutamine-hydrolyzing] (535 aa).

One can recognise a Glutamine amidotransferase type-1 domain in the interval 24–217 (KILIVDFGSQ…VRKVAGLKGD (194 aa)). Cys-101 functions as the Nucleophile in the catalytic mechanism. Residues His-191 and Glu-193 contribute to the active site. A GMPS ATP-PPase domain is found at 218–410 (WTMRAFREEA…LGLPEVFVGR (193 aa)). 245-251 (SGGVDSA) serves as a coordination point for ATP.

As to quaternary structure, homodimer.

The enzyme catalyses XMP + L-glutamine + ATP + H2O = GMP + L-glutamate + AMP + diphosphate + 2 H(+). Its pathway is purine metabolism; GMP biosynthesis; GMP from XMP (L-Gln route): step 1/1. Its function is as follows. Catalyzes the synthesis of GMP from XMP. This chain is GMP synthase [glutamine-hydrolyzing], found in Rhodopseudomonas palustris (strain BisB18).